The sequence spans 371 residues: MSQDYYQILGVSKTASQADLKKAYLKLAKQYHPDTTDAKDAEKKFKEINSAYDVLKDEQKRAAYDRFGHDTFQYQQSRGGGGNHGGFHPDINDIFGDFFSDFMGGGRRKPTSSKARGSDLKYDLTINLEEAFHGIEKNISFSSEVKCDTCHGTGSEKGETVTTCDACGGVGATRIQQGFFTIEQACHKCQGNGQIIKNPCKKCHGMGRYHKQRNLSVNIPAGVENATRIRHPGEGEAGIRGGNSGDLYVDIAIKPHDIYKVDGANLHCKLPISFVNAALGGEIEVPIIEGGKVNLTIPAGTQNGDQLRLRSKGMSKMRSTIRGDMLTHIHVEVPKNLSKRQRELLEEFKKESINEKENDGSFFNKMKSLWS.

The 65-residue stretch at 4–68 (DYYQILGVSK…QKRAAYDRFG (65 aa)) folds into the J domain. The CR-type zinc finger occupies 134–212 (GIEKNISFSS…CHGMGRYHKQ (79 aa)). The Zn(2+) site is built by C147, C150, C164, C167, C186, C189, C200, and C203. 4 CXXCXGXG motif repeats span residues 147–154 (CDTCHGTG), 164–171 (CDACGGVG), 186–193 (CHKCQGNG), and 200–207 (CKKCHGMG).

Belongs to the DnaJ family. As to quaternary structure, homodimer. The cofactor is Zn(2+).

The protein resides in the cytoplasm. Functionally, participates actively in the response to hyperosmotic and heat shock by preventing the aggregation of stress-denatured proteins and by disaggregating proteins, also in an autonomous, DnaK-independent fashion. Unfolded proteins bind initially to DnaJ; upon interaction with the DnaJ-bound protein, DnaK hydrolyzes its bound ATP, resulting in the formation of a stable complex. GrpE releases ADP from DnaK; ATP binding to DnaK triggers the release of the substrate protein, thus completing the reaction cycle. Several rounds of ATP-dependent interactions between DnaJ, DnaK and GrpE are required for fully efficient folding. Also involved, together with DnaK and GrpE, in the DNA replication of plasmids through activation of initiation proteins. The polypeptide is Chaperone protein DnaJ (Rickettsia felis (strain ATCC VR-1525 / URRWXCal2) (Rickettsia azadi)).